We begin with the raw amino-acid sequence, 136 residues long: Acidic phospholipase A2 EC-I (136 aa).

The first 16 residues, 1–16 (MKTLWIVAVWLIAVEG), serve as a signal peptide directing secretion. Intrachain disulfides connect cysteine 42-cysteine 129, cysteine 44-cysteine 60, cysteine 59-cysteine 111, cysteine 65-cysteine 136, cysteine 66-cysteine 104, cysteine 73-cysteine 97, and cysteine 91-cysteine 102. Tyrosine 43, glycine 45, and glycine 47 together coordinate Ca(2+). Histidine 63 is an active-site residue. Aspartate 64 contacts Ca(2+). Aspartate 105 is an active-site residue. Residues 112–133 (LGENVNTYDKKYKSYEDCTEEV) are may be responsible for inhibition of the platelet-aggregation activity.

It belongs to the phospholipase A2 family. Group II subfamily. D49 sub-subfamily. Monomer. Ca(2+) is required as a cofactor. In terms of tissue distribution, expressed by the venom gland.

The protein resides in the secreted. The enzyme catalyses a 1,2-diacyl-sn-glycero-3-phosphocholine + H2O = a 1-acyl-sn-glycero-3-phosphocholine + a fatty acid + H(+). In terms of biological role, snake venom phospholipase A2 (PLA2) that inhibits human platelet aggregation induced by ADP, collagen and epinephrin (possibly by binding the platelet receptor alpha-IIb/beta-III) and induces mild edema in the foot pads of mice. PLA2 catalyzes the calcium-dependent hydrolysis of the 2-acyl groups in 3-sn-phosphoglycerides. This chain is Acidic phospholipase A2 EC-I, found in Echis carinatus (Saw-scaled viper).